A 178-amino-acid chain; its full sequence is uncharacterized protein (178 aa).

The next 5 membrane-spanning stretches (helical) occupy residues 13 to 33 (GIVLTLTVLINGLIAVLFFMP), 48 to 68 (MLNAIFNSFTFIFLLAALIMI), 80 to 100 (ILAAFTTTLLFLICYVTYHSI), 115 to 135 (IYFFILITHICLSAIIVPLAL), and 155 to 175 (WTMPLWLYVSLTGVIVYLMIS).

The protein resides in the cell membrane. This is an uncharacterized protein from Bacillus subtilis (strain 168).